A 790-amino-acid chain; its full sequence is Pleckstrin homology domain-containing family G member 6 (790 aa).

A disordered region spans residues 63–91 (SGQARGLSPMRLRDPEPEKRHGGHVGAGL). Basic and acidic residues predominate over residues 73–82 (RLRDPEPEKR). Positions 161-353 (HQQEALWELL…ESFLRHINGQ (193 aa)) constitute a DH domain. A PH domain is found at 409–509 (QLLLEGPVRV…WLEKTQQAQA (101 aa)). 2 stretches are compositionally biased toward basic and acidic residues: residues 529–538 (LYRDQDRESP) and 625–635 (ELRDIPLRPHP). 3 disordered regions span residues 529–677 (LYRD…ASER), 690–730 (LRGQ…HTSL), and 748–790 (SQRI…ASEV). Basic and acidic residues predominate over residues 748–762 (SQRIEGAEEPRDSRP).

Interacts with MYH10. Interacts with ELMO1 and EZR (in an open conformation). Interacts with CSPP1. Highest expression in the placenta. Low levels in small intestine, lung, liver, kidney, thymus and heart.

It is found in the cell projection. The protein resides in the microvillus. The protein localises to the cytoplasm. Its subcellular location is the cytoskeleton. It localises to the spindle. It is found in the spindle pole. The protein resides in the cleavage furrow. Guanine nucleotide exchange factor activating the small GTPase RHOA, which, in turn, induces myosin filament formation. Also activates RHOG. Does not activate RAC1, or to a much lower extent than RHOA and RHOG. Part of a functional unit, involving PLEKHG6, MYH10 and RHOA, at the cleavage furrow to advance furrow ingression during cytokinesis. In epithelial cells, required for the formation of microvilli and membrane ruffles on the apical pole. Along with EZR, required for normal macropinocytosis. This is Pleckstrin homology domain-containing family G member 6 (PLEKHG6) from Homo sapiens (Human).